We begin with the raw amino-acid sequence, 133 residues long: CDGSH iron-sulfur domain-containing protein 2 homolog (133 aa).

Over 1–35 (MQSVSQVVKTSLPNYLSSLPVPDTFGGWFKLSFKD) the chain is Lumenal. Residues 36–58 (WLALIPPTAVVVGIGYVTYRAFY) form a helical membrane-spanning segment. Topologically, residues 59-133 (PKAHRTCKSG…NVGPIVIKKK (75 aa)) are cytoplasmic. Residues Cys-99, Cys-101, Cys-110, and His-114 each coordinate [2Fe-2S] cluster.

Belongs to the CISD protein family. CISD2 subfamily. The cofactor is [2Fe-2S] cluster.

It is found in the endoplasmic reticulum membrane. The sequence is that of CDGSH iron-sulfur domain-containing protein 2 homolog from Drosophila virilis (Fruit fly).